We begin with the raw amino-acid sequence, 436 residues long: Drebrin-like protein (436 aa).

Positions 2–133 (AVNLSRNGPA…EPECIMEKVA (132 aa)) constitute an ADF-H domain. Thr-26 bears the Phosphothreonine mark. Ser-160 is modified (phosphoserine). The residue at position 176 (Lys-176) is an N6-acetyllysine. Residues 179–233 (FWAKAEKEEENRRLEEKRRAEEERQRLEEERRERELQEAARREQRYQEQHRSAGA) are a coiled coil. 2 stretches are compositionally biased toward basic and acidic residues: residues 185–229 (KEEE…EQHR) and 264–275 (HPREIFKQKERA). The interval 185-341 (KEEENRRLEE…AQTEEEPTYE (157 aa)) is disordered. Residues 276–286 (MSTTSVTSSQP) show a composition bias toward polar residues. Ser-277, Ser-280, Ser-283, and Ser-291 each carry phosphoserine. Polar residues predominate over residues 294–303 (LQKQLTQPET). Residue Lys-296 is modified to N6-acetyllysine. A Phosphothreonine modification is found at Thr-299. Phosphotyrosine occurs at positions 340 and 350. The region spanning 377–436 (GQGLCARALYDYQAADDTEISFDPENLITGIEVIDEGWWRGYGPDGHFGMFPANYVELIE) is the SH3 domain.

Belongs to the ABP1 family. Interacts with SHANK3, SYN1 and PRAM1. Interacts with SHANK2. Interacts with FGD1, DNM1 and MAP4K1. Interacts with ANKRD54. Interacts with COBL. Interacts with WASL and WIPF1. As to expression, detected in hippocampus neurons and in the Purkinje cell layer in cerebellum (at protein level). Predominantly expressed in brain, thymus and spleen. Also found in testis, heart and lung. Little or no expression detected in ovary or muscle.

It is found in the cytoplasm. Its subcellular location is the cytoskeleton. The protein resides in the cell projection. It localises to the lamellipodium. The protein localises to the ruffle. It is found in the cell cortex. Its subcellular location is the cytosol. The protein resides in the synapse. It localises to the perikaryon. The protein localises to the neuron projection. It is found in the cell membrane. Its subcellular location is the cytoplasmic vesicle. The protein resides in the clathrin-coated vesicle membrane. It localises to the golgi apparatus membrane. The protein localises to the podosome. It is found in the early endosome. Its subcellular location is the dendrite. The protein resides in the postsynaptic density. In terms of biological role, adapter protein that binds F-actin and DNM1, and thereby plays a role in receptor-mediated endocytosis. Plays a role in the reorganization of the actin cytoskeleton, formation of cell projections, such as neurites, in neuron morphogenesis and synapse formation via its interaction with WASL and COBL. Does not bind G-actin and promote actin polymerization by itself. Required for the formation of organized podosome rosettes. May act as a common effector of antigen receptor-signaling pathways in leukocytes. Acts as a key component of the immunological synapse that regulates T-cell activation by bridging TCRs and the actin cytoskeleton to gene activation and endocytic processes. This is Drebrin-like protein from Mus musculus (Mouse).